The sequence spans 20 residues: Transcriptional regulatory protein PufK (20 aa).

Basic residues predominate over residues 1-11; it reads MVPYRNPRHQH. A disordered region spans residues 1–20; that stretch reads MVPYRNPRHQHVASVLRSGG.

In terms of biological role, involved in the transcriptional regulation of pufB. In Cereibacter sphaeroides (strain ATCC 17023 / DSM 158 / JCM 6121 / CCUG 31486 / LMG 2827 / NBRC 12203 / NCIMB 8253 / ATH 2.4.1.) (Rhodobacter sphaeroides), this protein is Transcriptional regulatory protein PufK (pufK).